The following is a 545-amino-acid chain: Light-independent protochlorophyllide reductase subunit N (545 aa).

Residues Cys102, Cys127, and Cys187 each contribute to the [4Fe-4S] cluster site.

Belongs to the BchN/ChlN family. In terms of assembly, protochlorophyllide reductase is composed of three subunits; ChlL, ChlN and ChlB. Forms a heterotetramer of two ChlB and two ChlN subunits. [4Fe-4S] cluster is required as a cofactor.

It is found in the plastid. The protein resides in the chloroplast. It carries out the reaction chlorophyllide a + oxidized 2[4Fe-4S]-[ferredoxin] + 2 ADP + 2 phosphate = protochlorophyllide a + reduced 2[4Fe-4S]-[ferredoxin] + 2 ATP + 2 H2O. It participates in porphyrin-containing compound metabolism; chlorophyll biosynthesis (light-independent). Functionally, component of the dark-operative protochlorophyllide reductase (DPOR) that uses Mg-ATP and reduced ferredoxin to reduce ring D of protochlorophyllide (Pchlide) to form chlorophyllide a (Chlide). This reaction is light-independent. The NB-protein (ChlN-ChlB) is the catalytic component of the complex. The sequence is that of Light-independent protochlorophyllide reductase subunit N from Chlamydomonas reinhardtii (Chlamydomonas smithii).